We begin with the raw amino-acid sequence, 348 residues long: Dihydroorotase (348 aa).

H17 and H19 together coordinate Zn(2+). Residues 19-21 (HLR) and N45 each bind substrate. Residues K103, H140, and H178 each contribute to the Zn(2+) site. An N6-carboxylysine modification is found at K103. Position 140 (H140) interacts with substrate. A substrate-binding site is contributed by L223. Residue D251 participates in Zn(2+) binding. The active site involves D251. The substrate site is built by H255 and A267.

The protein belongs to the metallo-dependent hydrolases superfamily. DHOase family. Class II DHOase subfamily. In terms of assembly, homodimer. It depends on Zn(2+) as a cofactor.

It catalyses the reaction (S)-dihydroorotate + H2O = N-carbamoyl-L-aspartate + H(+). It functions in the pathway pyrimidine metabolism; UMP biosynthesis via de novo pathway; (S)-dihydroorotate from bicarbonate: step 3/3. Its function is as follows. Catalyzes the reversible cyclization of carbamoyl aspartate to dihydroorotate. The sequence is that of Dihydroorotase from Shigella dysenteriae serotype 1 (strain Sd197).